Here is a 262-residue protein sequence, read N- to C-terminus: Thiazole synthase (262 aa).

Residue K97 is the Schiff-base intermediate with DXP of the active site. 1-deoxy-D-xylulose 5-phosphate-binding positions include G158, 185–186 (AG), and 207–208 (NT).

This sequence belongs to the ThiG family. In terms of assembly, homotetramer. Forms heterodimers with either ThiH or ThiS.

The protein localises to the cytoplasm. It carries out the reaction [ThiS sulfur-carrier protein]-C-terminal-Gly-aminoethanethioate + 2-iminoacetate + 1-deoxy-D-xylulose 5-phosphate = [ThiS sulfur-carrier protein]-C-terminal Gly-Gly + 2-[(2R,5Z)-2-carboxy-4-methylthiazol-5(2H)-ylidene]ethyl phosphate + 2 H2O + H(+). The protein operates within cofactor biosynthesis; thiamine diphosphate biosynthesis. Catalyzes the rearrangement of 1-deoxy-D-xylulose 5-phosphate (DXP) to produce the thiazole phosphate moiety of thiamine. Sulfur is provided by the thiocarboxylate moiety of the carrier protein ThiS. In vitro, sulfur can be provided by H(2)S. The chain is Thiazole synthase from Neisseria gonorrhoeae (strain ATCC 700825 / FA 1090).